The primary structure comprises 129 residues: N16.2 matrix protein (129 aa).

Residues 1 to 23 form the signal peptide; it reads MKCTLRWTITALVLLGICHLARP. A run of 5 repeats spans residues 91–92, 93–94, 95–96, 97–98, and 99–100. Residues 91-100 form a 5 X 2 AA tandem repeats of N-G region; it reads NGNGDGNGNG.

The protein belongs to the N16 matrix protein family. Heterooligomer; disulfide-linked. Pif97, Pif80, N16 and other proteins form a complex. In terms of tissue distribution, component of conchiolin, the organic matrix of nacre. Expressed at extremely high levels in the dorsal region of the mantle, which region may be responsible for the nacreous layer formation, but only in trace amounts at the mantle edge, which region may be responsible for the prismatic layer formation.

It localises to the secreted. The protein resides in the extracellular space. The protein localises to the extracellular matrix. Its function is as follows. May be specifically involved in the formation of the nacreous layer. This Pinctada fucata (Akoya pearl oyster) protein is N16.2 matrix protein.